The primary structure comprises 576 residues: MNLLELSEQEIIRRNSMEQLRQMGIEPYPAAEYVTNAFSKEIKETFKDDAEPRPVSIAGRIMSRRIMGKASFMELQDSEGRIQVYISRDDICPDENKDTYNVVFKKLLDIGDFVGIKGFVFRTQMGEISVHAQELTVLSKSLRPLPVVKYKDGVAYDGFNDPELRYRQRYVDLVVNEGVKDIFMKRAAIIKTMRTALDEAGYTEVETPILQSIAGGASARPFITHHNSLDIDLYLRIATELYLKRLIVGGFEGVYEIGKNFRNEGMDRTHNPEFTCMELYVQYKDYNWMMSFTEKLLERICIAVNGTSESTIDGKTISFKAPFRRLPILEAIKEKTGYDLEGKTEDEIRAICKELKMEIDDTMGKGKLIDEIFGEFCEGTFIQPTFIIDYPVEMSPLTKMHRSKPGLTERFELMVNGKELANAYSELNDPIDQEERFKEQLRLSEKGDDEAMFIDQDFLRALQFGMPPTSGIGIGIDRLVMLMTGQTTIQEVLLFPQMRPEKTVKKDNADKYVALGISEEWVPALQKAGYLTVEMLKNANANKLRQELCELNKKYKLELQNPTVQEIEAWIANVGE.

Mg(2+) contacts are provided by E412 and E419.

Belongs to the class-II aminoacyl-tRNA synthetase family. As to quaternary structure, homodimer. Mg(2+) is required as a cofactor.

The protein resides in the cytoplasm. It carries out the reaction tRNA(Lys) + L-lysine + ATP = L-lysyl-tRNA(Lys) + AMP + diphosphate. The polypeptide is Lysine--tRNA ligase (Parabacteroides distasonis (strain ATCC 8503 / DSM 20701 / CIP 104284 / JCM 5825 / NCTC 11152)).